Reading from the N-terminus, the 254-residue chain is MKANVYSMEGEVKEEIELPAIFNEEYRPDLIKRAVISAQTARVQPWGNDPEAGKRTSAKGWGSGRGTARVPRIKNGSKAAFVPMAVGGRRAHPTRAEKNHHEKINIKERRFAIRSAVAATANKELVENRGHRLGDLEQVPIIVEDDICSVKTTKQTREIFQNLGVYDDITRAKEGKRIRAGRGKTRGRKYKKVKGPLLVVGEDNGIKLGARNHAGVDVVTVENLNAELLAPGTHPGRLTIFTKSAVEKLGGLFQ.

The interval 45-70 is disordered; sequence PWGNDPEAGKRTSAKGWGSGRGTARV.

Belongs to the universal ribosomal protein uL4 family. As to quaternary structure, part of the 50S ribosomal subunit.

One of the primary rRNA binding proteins, this protein initially binds near the 5'-end of the 23S rRNA. It is important during the early stages of 50S assembly. It makes multiple contacts with different domains of the 23S rRNA in the assembled 50S subunit and ribosome. In terms of biological role, forms part of the polypeptide exit tunnel. The polypeptide is Large ribosomal subunit protein uL4 (Methanobrevibacter smithii (strain ATCC 35061 / DSM 861 / OCM 144 / PS)).